The chain runs to 299 residues: 6-phosphogluconate dehydrogenase, NAD(+)-dependent, decarboxylating (299 aa).

NAD(+)-binding positions include 7–12, 67–69, and asparagine 95; these read GLGRMG and VPA. Substrate is bound by residues asparagine 95, serine 118, and glycine 120. Lysine 169 functions as the Proton acceptor in the catalytic mechanism. A substrate-binding site is contributed by 172 to 173; the sequence is HN. Glutamate 176 serves as the catalytic Proton donor. Substrate is bound by residues tyrosine 177 and arginine 268.

This sequence belongs to the 6-phosphogluconate dehydrogenase family. Homotetramer.

The enzyme catalyses 6-phospho-D-gluconate + NAD(+) = D-ribulose 5-phosphate + CO2 + NADH. Its pathway is carbohydrate degradation; pentose phosphate pathway. Its function is as follows. Catalyzes the oxidative decarboxylation of 6-phosphogluconate to ribulose 5-phosphate and CO(2), with concomitant reduction of NAD to NADH. This is 6-phosphogluconate dehydrogenase, NAD(+)-dependent, decarboxylating from Haloferax volcanii (strain ATCC 29605 / DSM 3757 / JCM 8879 / NBRC 14742 / NCIMB 2012 / VKM B-1768 / DS2) (Halobacterium volcanii).